The chain runs to 165 residues: V-type proton ATPase 16 kDa proteolipid subunit (165 aa).

Over 1-10 the chain is Lumenal; that stretch reads MSSTFSGDET. Residues 11 to 33 traverse the membrane as a helical segment; sequence APFFGFLGAAAALVFSCMGAAYG. Residues 34-55 are Cytoplasmic-facing; that stretch reads TAKSGVGVASMGVMRPELVMKS. The chain crosses the membrane as a helical span at residues 56 to 76; that stretch reads IVPVVMAGVLGIYGLIIAVII. The Lumenal portion of the chain corresponds to 77–95; the sequence is STGINPKAKSYYLFDGYAH. The helical transmembrane segment at 96–117 threads the bilayer; sequence LSSGLACGLAGLSAGMAIGIVG. The Cytoplasmic portion of the chain corresponds to 118 to 129; sequence DAGVRANAQQPK. The chain crosses the membrane as a helical span at residues 130–155; it reads LFVGMILILIFAEALALYGLIVGIIL. Residues 156–165 are Lumenal-facing; the sequence is SSRAGQSRAE.

This sequence belongs to the V-ATPase proteolipid subunit family. V-ATPase is a heteromultimeric enzyme composed of a peripheral catalytic V1 complex (main components: subunits A, B, C, D, E, and F) attached to an integral membrane V0 proton pore complex (main component: the proteolipid protein; which is present as a hexamer that forms the proton-conducting pore).

It is found in the vacuole membrane. In terms of biological role, proton-conducting pore forming subunit of the membrane integral V0 complex of vacuolar ATPase. V-ATPase is responsible for acidifying a variety of intracellular compartments in eukaryotic cells. This Gossypium hirsutum (Upland cotton) protein is V-type proton ATPase 16 kDa proteolipid subunit (CVA16-2).